Reading from the N-terminus, the 506-residue chain is Galactose/methyl galactoside import ATP-binding protein MglA (506 aa).

2 ABC transporter domains span residues 14 to 249 and 264 to 506; these read LTMT…VGRE and VILE…AKYL. ATP is bound at residue 46 to 53; the sequence is GENGAGKS.

It belongs to the ABC transporter superfamily. Galactose/methyl galactoside importer (TC 3.A.1.2.3) family. The complex is composed of one ATP-binding protein (MglA), two transmembrane proteins (MglC) and a solute-binding protein (MglB).

It is found in the cell inner membrane. It carries out the reaction D-galactose(out) + ATP + H2O = D-galactose(in) + ADP + phosphate + H(+). The catalysed reaction is methyl beta-D-galactoside(out) + ATP + H2O = methyl beta-D-galactoside(in) + ADP + phosphate + H(+). Part of the ABC transporter complex MglABC involved in galactose/methyl galactoside import. Responsible for energy coupling to the transport system. The polypeptide is Galactose/methyl galactoside import ATP-binding protein MglA (Mannheimia succiniciproducens (strain KCTC 0769BP / MBEL55E)).